The chain runs to 1004 residues: Protein CHUP1, chloroplastic (1004 aa).

A required for chloroplast localization region spans residues 1-25 (MFVRIGFVVAASIAAVTVKRLNVKP). The disordered stretch occupies residues 22 to 63 (NVKPSKPSKPSDNGEGGDKEQSVDPDYNLNDKNLQEEEEEEE). Residues 123-341 (EMAYNDGELE…KQVEGLQMNR (219 aa)) are a coiled coil. The leucine-zipper 1 stretch occupies residues 269-290 (LEVQVMELKRKNRELQHEKREL). Disordered stretches follow at residues 398 to 482 (GSER…SMNK), 504 to 536 (FGQV…GEGL), 612 to 718 (TATG…GNKV), and 736 to 755 (SKKE…SSAA). Residue serine 399 is modified to Phosphoserine. The span at 409–419 (ESNYSQPSSPG) shows a compositional bias: polar residues. A compositionally biased stretch (low complexity) spans 427–439 (SMDSSTSRFSSFS). Composition is skewed to polar residues over residues 504-517 (FGQV…TPET) and 612-624 (TATG…SNES). Pro residues predominate over residues 670 to 706 (ARPPLPGGGPPPPPPPPGGGPPPPPGGGPPPPPPPPG). Over residues 744 to 755 (LISSGTGNSSAA) the composition is skewed to polar residues. Positions 802-823 (LLAFVSWLDEELSFLVDERAVL) are leucine-zipper 2. Residues 979-1004 (RSRAKTESGDNNNNNNNNSNEEESVN) form a disordered region.

Expressed in cauline leaves, rosette leaves, stems and flowers, but not in roots.

It localises to the plastid. The protein localises to the chloroplast outer membrane. In terms of biological role, required for the positioning and movement of chloroplasts. Interacts with profilin and actin independent of its polymerization status. Regulates chloroplast localization by anchoring chloroplasts to the plasma membrane and forming a bridge to the actin cytoskeleton. In Arabidopsis thaliana (Mouse-ear cress), this protein is Protein CHUP1, chloroplastic (CHUP1).